We begin with the raw amino-acid sequence, 353 residues long: Variable large protein 17 (353 aa).

The signal sequence occupies residues methionine 1–serine 18. Cysteine 19 is lipidated: N-palmitoyl cysteine. Cysteine 19 carries S-diacylglycerol cysteine lipidation. The disordered stretch occupies residues glutamate 332–asparagine 353. The segment covering glutamate 337 to asparagine 353 has biased composition (polar residues).

The protein belongs to the variable large protein (Vlp) family. Delta subfamily.

It localises to the cell outer membrane. The Vlp and Vsp proteins are antigenically distinct proteins, only one vlp or vsp gene is transcriptionally active at any one time. Switching between these genes is a mechanism of host immune response evasion. The chain is Variable large protein 17 from Borrelia hermsii.